We begin with the raw amino-acid sequence, 280 residues long: Dolichyl-diphosphooligosaccharide--protein glycosyltransferase subunit 2 (280 aa).

The N-terminal stretch at 1-16 (MKLLLVLLTIASVALA) is a signal peptide. Residues 17–187 (AVDDVAVNNF…FRQPEKRPSA (171 aa)) lie on the Lumenal side of the membrane. A helical membrane pass occupies residues 188–208 (LISDLFTIICLSPLLILVVLW). Residues 209–222 (SQVGINFQNAPASP) lie on the Cytoplasmic side of the membrane. Residues 223-243 (WVPIFHVGLIGIFGIYFMFWV) traverse the membrane as a helical segment. Residue glutamine 244 is a topological domain, lumenal. The chain crosses the membrane as a helical span at residues 245–265 (FDMFVTLKYLAVLGFLTFVAG). The Cytoplasmic portion of the chain corresponds to 266 to 280 (NRVLRAISESKQKSE).

This sequence belongs to the SWP1 family. In terms of assembly, component of the oligosaccharyltransferase (OST) complex.

It localises to the endoplasmic reticulum membrane. Its pathway is protein modification; protein glycosylation. Functionally, subunit of the oligosaccharyl transferase (OST) complex that catalyzes the initial transfer of a defined glycan (Glc(3)Man(9)GlcNAc(2) in eukaryotes) from the lipid carrier dolichol-pyrophosphate to an asparagine residue within an Asn-X-Ser/Thr consensus motif in nascent polypeptide chains, the first step in protein N-glycosylation. N-glycosylation occurs cotranslationally and the complex associates with the Sec61 complex at the channel-forming translocon complex that mediates protein translocation across the endoplasmic reticulum (ER). All subunits are required for a maximal enzyme activity. The polypeptide is Dolichyl-diphosphooligosaccharide--protein glycosyltransferase subunit 2 (Caenorhabditis elegans).